Reading from the N-terminus, the 1710-residue chain is Phosphatidylinositol 4-phosphate 5-kinase (1710 aa).

The EF-hand domain maps to 68–98 (YKSIFKAFDLNNDNYLDFYEFCVAINIMLKG). Positions 76, 78, 80, 82, and 87 each coordinate Ca(2+). 3 disordered regions span residues 139 to 255 (NNMN…DPIN), 427 to 479 (KQKK…IKSV), and 895 to 993 (GEGH…HNNN). Over residues 140–235 (NMNGDNINGD…HNNNSHNNNN (96 aa)) the composition is skewed to low complexity. The segment covering 236-248 (KAENSLGQPLNEK) has biased composition (polar residues). The segment covering 427-444 (KQKKKKKKKKKKKKKKEK) has biased composition (basic residues). A compositionally biased stretch (low complexity) spans 456–468 (SSSMENKSQNKSQ). Positions 902–973 (EEEEKNDDEE…DDNDDNDDND (72 aa)) are enriched in acidic residues. Residues 974-987 (EKSNIKIENKKDVP) are compositionally biased toward basic and acidic residues. Residues 1334–1709 (QKKTFHRILA…RFVTFIENHM (376 aa)) enclose the PIPK domain.

The enzyme catalyses a 1,2-diacyl-sn-glycero-3-phospho-(1D-myo-inositol 4-phosphate) + ATP = a 1,2-diacyl-sn-glycero-3-phospho-(1D-myo-inositol-4,5-bisphosphate) + ADP + H(+). Its activity is regulated as follows. Catalytic activity is increase by myristoylated ARF1. Phosphatidic acid has no effect on catalytic activity. In terms of biological role, catalyzes the phosphorylation of phosphatidylinositol 4-phosphate (PtdIns(4)P/PI4P) to form phosphatidylinositol 4,5-bisphosphate (PtdIns(4,5)P2/PIP2), a lipid second messenger that regulates several cellular processes. In Plasmodium falciparum (isolate 3D7), this protein is Phosphatidylinositol 4-phosphate 5-kinase.